A 593-amino-acid polypeptide reads, in one-letter code: UvrABC system protein C (593 aa).

In terms of domain architecture, GIY-YIG spans 17–94 (MEPGCYLMKD…IKQYQPRYNI (78 aa)). Positions 199 to 234 (KTILKSLEERMLTASESLDFERAKEYRDLIQHIQNL) constitute a UVR domain.

This sequence belongs to the UvrC family. In terms of assembly, interacts with UvrB in an incision complex.

It localises to the cytoplasm. In terms of biological role, the UvrABC repair system catalyzes the recognition and processing of DNA lesions. UvrC both incises the 5' and 3' sides of the lesion. The N-terminal half is responsible for the 3' incision and the C-terminal half is responsible for the 5' incision. The sequence is that of UvrABC system protein C from Staphylococcus aureus (strain MRSA252).